The following is a 290-amino-acid chain: UDP-N-acetylenolpyruvoylglucosamine reductase (290 aa).

Residues 20–187 (GVGGESEMWF…SRVRLKLRPS (168 aa)) enclose the FAD-binding PCMH-type domain. Arginine 167 is a catalytic residue.

This sequence belongs to the MurB family. Requires FAD as cofactor.

It is found in the cytoplasm. The catalysed reaction is UDP-N-acetyl-alpha-D-muramate + NADP(+) = UDP-N-acetyl-3-O-(1-carboxyvinyl)-alpha-D-glucosamine + NADPH + H(+). It participates in cell wall biogenesis; peptidoglycan biosynthesis. Cell wall formation. In Deinococcus radiodurans (strain ATCC 13939 / DSM 20539 / JCM 16871 / CCUG 27074 / LMG 4051 / NBRC 15346 / NCIMB 9279 / VKM B-1422 / R1), this protein is UDP-N-acetylenolpyruvoylglucosamine reductase.